The sequence spans 143 residues: Nucleoside diphosphate kinase 2 (143 aa).

Positions 11, 59, 87, 93, 104, and 114 each coordinate ATP. Catalysis depends on His-117, which acts as the Pros-phosphohistidine intermediate.

The protein belongs to the NDK family. In terms of assembly, homotetramer. The cofactor is Mg(2+).

It is found in the cytoplasm. The catalysed reaction is a 2'-deoxyribonucleoside 5'-diphosphate + ATP = a 2'-deoxyribonucleoside 5'-triphosphate + ADP. It carries out the reaction a ribonucleoside 5'-diphosphate + ATP = a ribonucleoside 5'-triphosphate + ADP. Functionally, major role in the synthesis of nucleoside triphosphates other than ATP. The ATP gamma phosphate is transferred to the NDP beta phosphate via a ping-pong mechanism, using a phosphorylated active-site intermediate. The polypeptide is Nucleoside diphosphate kinase 2 (Protochlamydia amoebophila (strain UWE25)).